The chain runs to 177 residues: Peptidoglycan-associated lipoprotein (177 aa).

The signal sequence occupies residues 1 to 32; the sequence is MSRTNISALSPMQKLARNPAVIAMTLALALAG. A lipid anchor (N-palmitoyl cysteine) is attached at C33. The S-diacylglycerol cysteine moiety is linked to residue C33. Positions 59-176 constitute an OmpA-like domain; it reads QQDFTVNVGD…RAVTVLGGAG (118 aa).

It belongs to the Pal lipoprotein family. The Tol-Pal system is composed of five core proteins: the inner membrane proteins TolA, TolQ and TolR, the periplasmic protein TolB and the outer membrane protein Pal. They form a network linking the inner and outer membranes and the peptidoglycan layer.

The protein localises to the cell outer membrane. Functionally, part of the Tol-Pal system, which plays a role in outer membrane invagination during cell division and is important for maintaining outer membrane integrity. In Agrobacterium fabrum (strain C58 / ATCC 33970) (Agrobacterium tumefaciens (strain C58)), this protein is Peptidoglycan-associated lipoprotein.